Consider the following 283-residue polypeptide: Protein MGARP (283 aa).

The segment at 1–36 is disordered; it reads MYLRRAVSKTLALPRRAPPGPAPLGKDASLRRMSSR. Residues 1–41 are Cytoplasmic-facing; it reads MYLRRAVSKTLALPRRAPPGPAPLGKDASLRRMSSRKFPGT. Residues 42 to 64 form a helical; Anchor for type IV membrane protein membrane-spanning segment; the sequence is SGSNMIYYLVVGVTVSAGGYYTY. Over 65–283 the chain is Mitochondrial intermembrane; the sequence is KALTSKQVRR…VTEETASPQG (219 aa). Disordered stretches follow at residues 78-101 and 118-283; these read VAEP…EHVA and AESV…SPQG. A compositionally biased stretch (low complexity) spans 128–160; it reads EAAVVLPEESQASAPSEVPAEAAVVEASLSSSE. Composition is skewed to polar residues over residues 171 to 184 and 199 to 220; these read VETT…TQEV and ADTS…QEGA. Residues 221 to 245 show a composition bias toward basic and acidic residues; that stretch reads DTTKEEADNSKEAEGTTTEDPRSIS.

As to quaternary structure, interacts with RHOT1/Miro-1, RHOT2/Miro-2, TRAK1/OIP106 and TRAK2/GRIF1. As to expression, expressed in the ovary, testis, brain, adrenal glands and the compartments of the visual nervous system. Expressed in corneal endothelium (CE) (at protein level). Expressed in steroidogenic tissues with the highest level of expression observed in the adrenal gland. Weakly expressed in placenta. Weakly expressed in astrocytes and neurons under normoxia. Strongly expressed in astrocytes and neurons under hypoxia. Expressed in each layer of the retina, with particularly higher staining in the inner segment of the photoreceptor (IS), the outer plexiform layer (OPL) and the ganglion cell layer (GCL).

Its subcellular location is the mitochondrion. It localises to the mitochondrion outer membrane. The protein localises to the mitochondrion inner membrane. Functionally, plays a role in the trafficking of mitochondria along microtubules. Regulates the kinesin-mediated axonal transport of mitochondria to nerve terminals along microtubules during hypoxia. Participates in the translocation of TRAK2/GRIF1 from the cytoplasm to the mitochondrion. Also plays a role in steroidogenesis through maintenance of mitochondrial abundance and morphology. Plays an inhibitory role during neocortex development by regulating mitochondrial morphology, distribution and motility in neocortical neurons. The protein is Protein MGARP (Mgarp) of Mus musculus (Mouse).